The chain runs to 463 residues: Kynurenine 3-monooxygenase (463 aa).

This sequence belongs to the aromatic-ring hydroxylase family. KMO subfamily. Requires FAD as cofactor.

The protein localises to the mitochondrion outer membrane. The enzyme catalyses L-kynurenine + NADPH + O2 + H(+) = 3-hydroxy-L-kynurenine + NADP(+) + H2O. It functions in the pathway cofactor biosynthesis; NAD(+) biosynthesis; quinolinate from L-kynurenine: step 1/3. Functionally, catalyzes the hydroxylation of L-kynurenine (L-Kyn) to form 3-hydroxy-L-kynurenine (L-3OHKyn). Required for synthesis of quinolinic acid. This is Kynurenine 3-monooxygenase from Yarrowia lipolytica (strain CLIB 122 / E 150) (Yeast).